The following is a 224-amino-acid chain: GTP-binding protein RHO3 (224 aa).

GTP is bound at residue glycine 22–threonine 29. An Effector region motif is present at residues tyrosine 44–tyrosine 52. GTP contacts are provided by residues aspartate 69–glutamine 73 and leucine 127–aspartate 130. The disordered stretch occupies residues threonine 205 to methionine 224. Position 221 is a cysteine methyl ester (cysteine 221). A lipid anchor (S-geranylgeranyl cysteine) is attached at cysteine 221. A propeptide spans threonine 222–methionine 224 (removed in mature form).

It belongs to the small GTPase superfamily. Rho family.

It is found in the cell membrane. In terms of biological role, involved in the regulation of actin polarization. Rho proteins are required for distinct steps during polarized hyphal growth of A.gossypii. This is GTP-binding protein RHO3 (RHO3) from Eremothecium gossypii (strain ATCC 10895 / CBS 109.51 / FGSC 9923 / NRRL Y-1056) (Yeast).